The chain runs to 130 residues: Cholecystokinin (130 aa).

Residues 1–20 (MYIGICICVLLAALSASSTG) form the signal peptide. A propeptide spanning residues 21 to 60 (QQTVGSMNEDPGAREIEQQNILQHPRHIRASSSAQLKPFQ) is cleaved from the precursor. Y112 carries the sulfotyrosine modification. The residue at position 118 (F118) is a Phenylalanine amide. A propeptide spanning residues 122-130 (SAEEYEYSS) is cleaved from the precursor. Y126 and Y128 each carry sulfotyrosine.

Belongs to the gastrin/cholecystokinin family. The precursor is cleaved by proteases to produce a number of active cholecystokinins. In terms of tissue distribution, expressed in brain, lung, testis and throughout the length of the small intestine. In the brain, expressed predominantly in the optic tectum and brain stem.

The protein localises to the secreted. Its function is as follows. This peptide hormone induces gall bladder contraction and the release of pancreatic enzymes in the gut. Its function in the brain is not clear. This chain is Cholecystokinin (CCK), found in Aquarana catesbeiana (American bullfrog).